The chain runs to 395 residues: Syncephapepsin (395 aa).

Residues 1-19 (MKFSLALLATVALATISQA) form the signal peptide. Positions 20-71 (APVEKQVAGKPFQLVKNPHYQANATRAIFRAEKKYARHTAIPEQGKTIVKSA) are cleaved as a propeptide — activation peptide. Positions 89–391 (YYATVSVGTP…NQGVPEVQIA (303 aa)) constitute a Peptidase A1 domain. D107 is an active-site residue. Residues C120 and C123 are joined by a disulfide bond. Residue D288 is part of the active site. C322 and C355 are joined by a disulfide.

The protein belongs to the peptidase A1 family. In terms of assembly, monomer.

Functionally, hydrolysis of proteins with a broad specificity. Residues recognized to be cleaved were primarily those of trypsin and chymotrypsin and Lys was the most susceptible. This is Syncephapepsin (SPSR) from Syncephalastrum racemosum (Filamentous fungus).